The following is a 96-amino-acid chain: Small ribosomal subunit protein bS6 (96 aa).

Belongs to the bacterial ribosomal protein bS6 family.

Functionally, binds together with bS18 to 16S ribosomal RNA. The protein is Small ribosomal subunit protein bS6 of Streptococcus suis (strain 98HAH33).